A 263-amino-acid polypeptide reads, in one-letter code: MESITISKIQNWKKNQIKFAAITAYDFSFSRLFEKEGIPIMLVGDSLGMTIQGHNSTLPVKIQDIKYHTKAVRRGAPNSFLLSDLPFMSYYSIEETLKNTAKIIQSGANMIKIEGGKWLVETVKELSKRSILVCGHIGLTPQSINFLSGYKIQGKEKNDAQRIIDEAFILEEAGIKMLVLECIPSLLAKKITENLSIPVIGIGSGHHTDGQILVMQDLLGITDGKKLKFVKNFLCHNGSIQNAIKQYINEVKNGNFPSEKYSF.

Residues aspartate 45 and aspartate 84 each coordinate Mg(2+). Residues 45–46 (DS), aspartate 84, and lysine 112 contribute to the 3-methyl-2-oxobutanoate site. Glutamate 114 lines the Mg(2+) pocket. Glutamate 181 functions as the Proton acceptor in the catalytic mechanism.

It belongs to the PanB family. As to quaternary structure, homodecamer; pentamer of dimers. It depends on Mg(2+) as a cofactor.

The protein localises to the cytoplasm. It catalyses the reaction 3-methyl-2-oxobutanoate + (6R)-5,10-methylene-5,6,7,8-tetrahydrofolate + H2O = 2-dehydropantoate + (6S)-5,6,7,8-tetrahydrofolate. The protein operates within cofactor biosynthesis; (R)-pantothenate biosynthesis; (R)-pantoate from 3-methyl-2-oxobutanoate: step 1/2. Functionally, catalyzes the reversible reaction in which hydroxymethyl group from 5,10-methylenetetrahydrofolate is transferred onto alpha-ketoisovalerate to form ketopantoate. This Buchnera aphidicola subsp. Schizaphis graminum (strain Sg) protein is 3-methyl-2-oxobutanoate hydroxymethyltransferase.